The following is a 382-amino-acid chain: uncharacterized protein (382 aa).

Transmembrane regions (helical) follow at residues 14-34 (GLLLLTLAIAVLNTLVPLWLA), 45-65 (MVSSSYFTGNLVGTLLTGYLI), 79-99 (LVFAAGCLGLGLMIGFWSWMA), 102-122 (FVAGVGCAMIWVVVESALMCS), 131-151 (LLAAYMMIYYVGTFLGQLLVS), 157-177 (LMNVLPWVTALILAGILPLLF), 204-224 (LGVNGCIISGIVLGSLYGLMP), 236-256 (NIGFWMAVLVSAGIVGQWPIG), 265-285 (LLVLRVQIFVVILGSIAMLTH), 289-309 (APALFILGAAGFTLYPVAMAW), 325-345 (ALLLSYTIGSLLGPSFTAMLM), and 349-369 (SDNLLFIMIASVSFIYLLMLL).

It belongs to the major facilitator superfamily. YcaD (TC 2.A.1.26) family.

The protein localises to the cell inner membrane. This is an uncharacterized protein from Escherichia fergusonii (strain ATCC 35469 / DSM 13698 / CCUG 18766 / IAM 14443 / JCM 21226 / LMG 7866 / NBRC 102419 / NCTC 12128 / CDC 0568-73).